A 401-amino-acid polypeptide reads, in one-letter code: Multidrug resistance protein MdtH (401 aa).

A run of 11 helical transmembrane segments spans residues 13–33 (YFLLFDNLLVVLGFFVVFPLI), 34–54 (SIRFVDQLGWAALVVGLALGL), 99–116 (PWILWLACALSGLGGTLF), 139–159 (LLMMQDSAGAVIGALIGSWLL), 165–185 (FVCWTGAAIFVLAAGWNAWLL), 214–234 (VLTLTGYYMLAVQVMLMLPIV), 243–263 (AAVKWMYAIEAALSLTLLYPL), 277–297 (LMAGLLIMTLSLFPIGMITHL), 299–319 (TLFMFICFFYMGSILAEPARE), 340–360 (LGLALGGALGYTGGGWMYDTG), and 368–388 (LPWFLLGIIGLITLAGLYWQF).

It belongs to the major facilitator superfamily. DHA1 family. MdtH (TC 2.A.1.2.21) subfamily.

Its subcellular location is the cell inner membrane. The sequence is that of Multidrug resistance protein MdtH from Yersinia pseudotuberculosis serotype O:1b (strain IP 31758).